The primary structure comprises 83 residues: uncharacterized protein (83 aa).

This is an uncharacterized protein from Rhizobium meliloti (strain 1021) (Ensifer meliloti).